Reading from the N-terminus, the 282-residue chain is Transcription factor BC1 (282 aa).

Positions 34-123 (TTAPAIPEDA…ATDSHSLAER (90 aa)) are disordered. Polar residues predominate over residues 45 to 55 (METSSVVLDTS). Basic and acidic residues predominate over residues 75–84 (HSKEAKENGR). The Nuclear localization signal signature appears at 109 to 116 (ARRGQATD). The interval 113–126 (QATDSHSLAERVRR) is basic motif; degenerate. In terms of domain architecture, bHLH spans 113–163 (QATDSHSLAERVRRERISERMRMLQALVPGCDKVTGKALILDEIINYVQSL). The interval 127-163 (ERISERMRMLQALVPGCDKVTGKALILDEIINYVQSL) is helix-loop-helix motif. Residues 219–251 (PAQSHAIMDTSNTSPTPYTLQVQGGSNNNSLSQ) are disordered.

It belongs to the bHLH protein family. As to quaternary structure, homodimer. Component of a nuclear cell elongation controlling complex made of ILI5/BUL1, LO9-177 and BC1. Interacts with ILI5/BUL1 only in the presence of LO9-177. Interacts with IBH1. Binds to LO9-177 in the nucleus. Interacts with BCL1. In terms of tissue distribution, preferentially present in anthers and leaves lamina joints. Expressed in seedlings, leaves sheaths, collars and panicles.

The protein resides in the nucleus. Transcription activator that contributes, together with LO9-177 and ILI5/BUL1, to the promotion of leaf inclination and grain size by modulating cell elongation. Involved in the RLI1-dependent modulation of leaf inclination by promoting lamina joint cell elongation, especially in response to phosphate (Pi) availability. In Oryza sativa subsp. japonica (Rice), this protein is Transcription factor BC1.